A 181-amino-acid polypeptide reads, in one-letter code: Adenine phosphoribosyltransferase (181 aa).

This sequence belongs to the purine/pyrimidine phosphoribosyltransferase family. In terms of assembly, homodimer.

It is found in the cytoplasm. The catalysed reaction is AMP + diphosphate = 5-phospho-alpha-D-ribose 1-diphosphate + adenine. It participates in purine metabolism; AMP biosynthesis via salvage pathway; AMP from adenine: step 1/1. Catalyzes a salvage reaction resulting in the formation of AMP, that is energically less costly than de novo synthesis. The sequence is that of Adenine phosphoribosyltransferase from Vibrio campbellii (strain ATCC BAA-1116).